The following is a 598-amino-acid chain: Elongation factor 4 (598 aa).

The tr-type G domain maps to 4-186 (SHIRNFAIIA…AIVSRLPAPS (183 aa)). GTP is bound by residues 16–21 (DHGKST) and 133–136 (NKID).

The protein belongs to the TRAFAC class translation factor GTPase superfamily. Classic translation factor GTPase family. LepA subfamily.

The protein localises to the cell inner membrane. It catalyses the reaction GTP + H2O = GDP + phosphate + H(+). Required for accurate and efficient protein synthesis under certain stress conditions. May act as a fidelity factor of the translation reaction, by catalyzing a one-codon backward translocation of tRNAs on improperly translocated ribosomes. Back-translocation proceeds from a post-translocation (POST) complex to a pre-translocation (PRE) complex, thus giving elongation factor G a second chance to translocate the tRNAs correctly. Binds to ribosomes in a GTP-dependent manner. The chain is Elongation factor 4 from Ehrlichia chaffeensis (strain ATCC CRL-10679 / Arkansas).